We begin with the raw amino-acid sequence, 543 residues long: Zinc finger protein egl-43 (543 aa).

A positive regulatory (PR) domain region spans residues 2-62 (SIDTDFLTSV…NLIKEADDGE (61 aa)). C2H2-type zinc fingers lie at residues 159–181 (HKCG…SHIH) and 187–209 (FRCH…RRVH). A C2H2-type 3; atypical zinc finger spans residues 213 to 233 (WTCPTCQSQMPSQAALTKHRP). Positions 299–380 (PDAECSSGHA…TSTKKRPTSH (82 aa)) are disordered. Polar residues predominate over residues 306 to 317 (GHASESSPTTTE). Residues 335–348 (TTSKSDDGEDRDSI) are compositionally biased toward basic and acidic residues. C2H2-type zinc fingers lie at residues 444–466 (YTCK…LRTH) and 472–495 (YKCQ…RNIH). The disordered stretch occupies residues 496-543 (NKPNTSLTPHNHHRQRSLHNSTSTSTTTTTVHHPLLHLPGTSVPVPKV). The segment covering 513–533 (LHNSTSTSTTTTTVHHPLLHL) has biased composition (low complexity).

The protein resides in the nucleus. Functionally, probable transcription factor, required for migration of the hermaphrodite-specific motor neurons (HSNs) from the tail to the gonad primordium during HSN cell differentiation. Required for phasmid neuron development. Required to specify the pi-cell fate of ventral uterine precursor cell (VU) cells. In terms of biological role, probable transcription factor, involved in lin-12 (Notch)-dependent anchor cell (AC) and ventral uterine (VU) precursor cell fate specification and in AC invasion. Prevents AC proliferation after AC cell specification by repressing lin-12 expression. May form a positive feedback loop, together with the transcription factor fos-1, that maintains mutual high levels of expression and so activates AC invasion. Its function is as follows. Dispensable for anchor cell (AC) invasion and for preventing AC proliferation. This Caenorhabditis elegans protein is Zinc finger protein egl-43.